Consider the following 200-residue polypeptide: NAD(P)H dehydrogenase (quinone) (200 aa).

Positions 4–191 (LLVLYYSMYG…TIARFQGEHV (188 aa)) constitute a Flavodoxin-like domain. FMN contacts are provided by residues 10–15 (SMYGHV) and 79–81 (TRF). Tyrosine 12 is a binding site for NAD(+). Tryptophan 99 serves as a coordination point for substrate. Residues 114-120 (STASQHG) and histidine 135 contribute to the FMN site.

Belongs to the WrbA family. It depends on FMN as a cofactor.

It catalyses the reaction a quinone + NADH + H(+) = a quinol + NAD(+). The catalysed reaction is a quinone + NADPH + H(+) = a quinol + NADP(+). This is NAD(P)H dehydrogenase (quinone) from Nitrosococcus oceani (strain ATCC 19707 / BCRC 17464 / JCM 30415 / NCIMB 11848 / C-107).